A 211-amino-acid polypeptide reads, in one-letter code: Ethylene-responsive transcription factor LEP (211 aa).

Disordered stretches follow at residues 1 to 21 (MNTT…TRFL) and 74 to 110 (NFVY…NDPV). The segment at residues 19–76 (RFLGVRRRPWGRYAAEIRDPTTKERHWLGTFDTAEEAALAYDRAARSMRGTRARTNFV) is a DNA-binding region (AP2/ERF). Over residues 81–92 (PPSSSVTSIVSP) the composition is skewed to low complexity. The segment covering 93–107 (DDPPPPPPPPAPPSN) has biased composition (pro residues).

The protein belongs to the AP2/ERF transcription factor family. ERF subfamily. In terms of tissue distribution, expressed in germinating seeds. Present in young shoots, at low levels, especially in leaf primordia and developing leaf blades. Also detected in vascular tissue, mostly in xylem, of young leaves, petioles and hypocotyls.

It localises to the nucleus. Functionally, cell division-promoting factor involved in leaf blade differentiation, inflorescence branching, as well as in carpel and silique shape. Promotes the number of xylem cells. Positively regulates the gibberellin signaling pathway leading to germination, hypocotyl elongation, and leaf expansion. Probably acts as a transcriptional activator. Binds to the GCC-box pathogenesis-related promoter element. May be involved in the regulation of gene expression by stress factors and by components of stress signal transduction pathways. The chain is Ethylene-responsive transcription factor LEP (LEP) from Arabidopsis thaliana (Mouse-ear cress).